Reading from the N-terminus, the 548-residue chain is MKLKKLLLSVLMLLSISGLQAQSLSPSTQIHWDKGTLVIETPERPTDQQHVLGLTAPKMETVRVAFVGLGMRGPWAVWRFCNIPGVEVVALCDYEEDRAEASQKYLRDASLIPADIYSGEKGYETLCQRPDIDLVYIATDWNHHFPVAKYAMKHGKHVAIEVPSAMNLEQCWSLIDLSEQTRLHCFILENCCYDYYEMNALAMAKDGVFGEIIRAEGAYIHELSAFWKSYWQDPNDNDTDNLHWRMKYNMENRGDVYATHGLGPVAQCMDIHRGDRFTTLVAMDTESFVGKQYVENLTGKEPKEFRNGDHTTTLMRTARGKVVEIQHNVMTPQPYNRLFKLTGTKGYATKYPTPEYALSGDVMKDTAPNMDDINAHSFLNDAQKEALEKKYYHPILTKFGEKGRAMGHGGMDYIMDARLVYCLQNGLPLDMDVYDLAEWCCLSELGALSMDNNCAAVTFPDFTRGHWDEMKGYKHAYASAEEEEATEAKAEAYTIAQKEVAAAANLWTLYDNVKNAADEKAQDKALKIYQRAKAKAHQQLAKKLKVKK.

Positions 1–21 (MKLKKLLLSVLMLLSISGLQA) are cleaved as a signal peptide. NAD(+) contacts are provided by residues 71–72 (MR), Asp93, 141–144 (WNHH), 161–162 (EV), and Asn190. Tyr219 is a binding site for substrate. Residue 240 to 244 (DNLHW) coordinates NAD(+). Substrate contacts are provided by residues Arg245, 257-260 (YATH), and Tyr335. Tyr257 serves as a coordination point for NAD(+).

This sequence belongs to the Gfo/Idh/MocA family. Glycosyl hydrolase 109 subfamily. Requires NAD(+) as cofactor.

In terms of biological role, glycosidase. In Phocaeicola vulgatus (strain ATCC 8482 / DSM 1447 / JCM 5826 / CCUG 4940 / NBRC 14291 / NCTC 11154) (Bacteroides vulgatus), this protein is Glycosyl hydrolase family 109 protein 3.